Reading from the N-terminus, the 266-residue chain is Glutamate racemase (266 aa).

Substrate contacts are provided by residues 9-10 (DS) and 41-42 (YG). The Proton donor/acceptor role is filled by Cys-72. 73-74 (NT) is a binding site for substrate. Cys-183 acts as the Proton donor/acceptor in catalysis. A substrate-binding site is contributed by 184–185 (TH).

It belongs to the aspartate/glutamate racemases family.

The enzyme catalyses L-glutamate = D-glutamate. The protein operates within cell wall biogenesis; peptidoglycan biosynthesis. In terms of biological role, provides the (R)-glutamate required for cell wall biosynthesis. This is Glutamate racemase from Listeria innocua serovar 6a (strain ATCC BAA-680 / CLIP 11262).